Consider the following 282-residue polypeptide: E3 ubiquitin-protein ligase SIAH1 (282 aa).

Residues 1 to 17 show a composition bias toward polar residues; the sequence is MSRQTATALPTGTSKCP. A disordered region spans residues 1–22; sequence MSRQTATALPTGTSKCPPSQRV. Position 19 is a phosphoserine; by ATM and ATR (serine 19). Residues 41 to 76 form an RING-type zinc finger; sequence CPVCFDYVLPPILQCQSGHLVCSNCRPKLTCCPTCR. The tract at residues 90–282 is SBD; the sequence is VANSVLFPCK…LGINVTISMC (193 aa). An SIAH-type zinc finger spans residues 93 to 153; sequence SVLFPCKYAS…VMPHLMHQHK (61 aa). The Zn(2+) site is built by cysteine 98, cysteine 105, histidine 117, cysteine 121, cysteine 128, cysteine 135, histidine 147, and histidine 152.

The protein belongs to the SINA (Seven in absentia) family. Homodimer. Interacts with group 1 glutamate receptors GRM1 and GRM5. Interacts with DAB1, which may inhibit its activity. Interacts with UBE2E2. Interacts with PEG3. Interacts with GAPDH; leading to stabilize SIAH1. Component of some large E3 complex composed of UBE2D1, SIAH1, CACYBP/SIP, SKP1, APC and TBL1X. Interacts with UBE2I. Interacts with alpha-tubulin. Interacts with PEG10, which may inhibit its activity. Interacts with KHDRBS3. Interacts with SNCAIP. Interacts with HIPK2; the interaction is promoted by DAZAP2 and results in SIAH1-mediated ubiquitination and subsequent proteasomal degradation of HIPK2. Interacts with DAZAP2; the interaction is decreased following phosphorylation of DAZAP2 by HIPK2. Interacts with Bassoon/BSN and Piccolo/PLCO; these interactions negatively regulate SIAH1 E3 ligase activity. Interacts with DCC. Interacts with AXIN1; catalyzes AXIN1 ubiquitination and subsequent proteasome-mediated ubiquitin-dependent degradation. Phosphorylated on Ser-19 by ATM and ATR. This phosphorylation disrupts SIAH1 interaction with HIPK2, and subsequent proteasomal degradation of HIPK2. In terms of tissue distribution, widely expressed at a low level. Down-regulated in advanced hepatocellular carcinomas.

It localises to the cytoplasm. Its subcellular location is the nucleus. The enzyme catalyses S-ubiquitinyl-[E2 ubiquitin-conjugating enzyme]-L-cysteine + [acceptor protein]-L-lysine = [E2 ubiquitin-conjugating enzyme]-L-cysteine + N(6)-ubiquitinyl-[acceptor protein]-L-lysine.. It participates in protein modification; protein ubiquitination. Inhibited by interaction with SNCAIP (isoform 2, but not isoform 1). May be inhibited by interaction with PEG10. Its function is as follows. E3 ubiquitin-protein ligase that mediates ubiquitination and subsequent proteasomal degradation of target proteins. E3 ubiquitin ligases accept ubiquitin from an E2 ubiquitin-conjugating enzyme in the form of a thioester and then directly transfers the ubiquitin to targeted substrates. Mediates E3 ubiquitin ligase activity either through direct binding to substrates or by functioning as the essential RING domain subunit of larger E3 complexes. Triggers the ubiquitin-mediated degradation of many substrates, including proteins involved in transcription regulation (ELL2, MYB, POU2AF1, PML and RBBP8), a cell surface receptor (DCC), the cell-surface receptor-type tyrosine kinase FLT3, the cytoplasmic signal transduction molecules (KLF10/TIEG1 and NUMB), an antiapoptotic protein (BAG1), a microtubule motor protein (KIF22), a protein involved in synaptic vesicle function in neurons (SYP), a structural protein (CTNNB1) and SNCAIP. Confers constitutive instability to HIPK2 through proteasomal degradation. It is thereby involved in many cellular processes such as apoptosis, tumor suppression, cell cycle, axon guidance, transcription regulation, spermatogenesis and TNF-alpha signaling. Has some overlapping function with SIAH2. Induces apoptosis in cooperation with PEG3. Upon nitric oxid (NO) generation that follows apoptotic stimulation, interacts with S-nitrosylated GAPDH, mediating the translocation of GAPDH to the nucleus. GAPDH acts as a stabilizer of SIAH1, facilitating the degradation of nuclear proteins. Mediates ubiquitination and degradation of EGLN2 and EGLN3 in response to the unfolded protein response (UPR), leading to their degradation and subsequent stabilization of ATF4. Also part of the Wnt signaling pathway in which it mediates the Wnt-induced ubiquitin-mediated proteasomal degradation of AXIN1. The sequence is that of E3 ubiquitin-protein ligase SIAH1 (SIAH1) from Homo sapiens (Human).